Here is a 235-residue protein sequence, read N- to C-terminus: NAD(P)H-hydrate epimerase (235 aa).

One can recognise a YjeF N-terminal domain in the interval 18–221 (AAQIDEQLFT…SLVDEHELLM (204 aa)). 65 to 69 (NNGGD) contributes to the (6S)-NADPHX binding site. The K(+) site is built by asparagine 66 and aspartate 127. (6S)-NADPHX contacts are provided by residues 131–137 (GFSFHPP) and aspartate 160. Serine 163 provides a ligand contact to K(+).

Belongs to the NnrE/AIBP family. K(+) serves as cofactor.

It carries out the reaction (6R)-NADHX = (6S)-NADHX. The enzyme catalyses (6R)-NADPHX = (6S)-NADPHX. Catalyzes the epimerization of the S- and R-forms of NAD(P)HX, a damaged form of NAD(P)H that is a result of enzymatic or heat-dependent hydration. This is a prerequisite for the S-specific NAD(P)H-hydrate dehydratase to allow the repair of both epimers of NAD(P)HX. The chain is NAD(P)H-hydrate epimerase from Caenorhabditis elegans.